A 350-amino-acid chain; its full sequence is Guanine nucleotide-binding protein G(t) subunit alpha-1 (350 aa).

Positions 1-21 (MGAGASAEEKHSRELEKKLKE) are disordered. Residue Gly2 is the site of N-myristoyl glycine attachment. Residues 7-21 (AEEKHSRELEKKLKE) show a composition bias toward basic and acidic residues. Residues 28–350 (RTVKLLLLGA…KENLKDCGLF (323 aa)) form the G-alpha domain. The tract at residues 31–44 (KLLLLGAGESGKST) is G1 motif. 36–43 (GAGESGKS) lines the GTP pocket. Position 43 (Ser43) interacts with Mg(2+). Tyr142 carries the post-translational modification Phosphotyrosine. GTP-binding positions include Asp146, 171–177 (LRSRVKT), Gly199, 265–268 (NKKD), and Ala322. Positions 169–177 (DVLRSRVKT) are G2 motif. Thr177 is a binding site for Mg(2+). The interval 192–201 (FRMFDVGGQR) is G3 motif. The G4 motif stretch occupies residues 261 to 268 (VLFLNKKD). Residues 320-325 (TCATDT) are G5 motif. Residues 340-350 (IKENLKDCGLF) form an interaction with RHO region.

The protein belongs to the G-alpha family. G(i/o/t/z) subfamily. In terms of assembly, heterotrimeric G proteins are composed of 3 subunits alpha, beta and gamma. The alpha chain contains the guanine nucleotide binding site. Interacts with RHO. Interacts with RGS9 and PDE6G. Interacts (when myristoylated) with UNC119; interaction is required for localization in sensory neurons. In the retina, expressed in the rod photoreceptors.

It is found in the cell projection. The protein localises to the cilium. Its subcellular location is the photoreceptor outer segment. It localises to the membrane. The protein resides in the photoreceptor inner segment. Functions as a signal transducer for the rod photoreceptor RHO. Required for normal RHO-mediated light perception by the retina. Guanine nucleotide-binding proteins (G proteins) function as transducers downstream of G protein-coupled receptors (GPCRs), such as the photoreceptor RHO. The alpha chain contains the guanine nucleotide binding site and alternates between an active, GTP-bound state and an inactive, GDP-bound state. Activated RHO promotes GDP release and GTP binding. Signaling is mediated via downstream effector proteins, such as cGMP-phosphodiesterase. The chain is Guanine nucleotide-binding protein G(t) subunit alpha-1 (Gnat1) from Mus musculus (Mouse).